The sequence spans 448 residues: Proteases secretion protein PrtE (448 aa).

At 1–30 (MTGMDITTQDELNEAAMRDRASRDEERALR) the chain is on the cytoplasmic side. The chain crosses the membrane as a helical span at residues 31 to 50 (LGWWLVLAGFGGFLLWALLA). At 51-448 (PLDKGVAVQG…DRMHLALTEE (398 aa)) the chain is on the periplasmic side.

Belongs to the membrane fusion protein (MFP) (TC 8.A.1) family.

It localises to the cell inner membrane. Functionally, involved in the secretion of proteases A, B, C and G. This Dickeya chrysanthemi (Pectobacterium chrysanthemi) protein is Proteases secretion protein PrtE (prtE).